Here is a 359-residue protein sequence, read N- to C-terminus: Phospho-N-acetylmuramoyl-pentapeptide-transferase (359 aa).

10 consecutive transmembrane segments (helical) span residues 24–44, 72–92, 100–120, 134–154, 170–190, 197–217, 234–254, 261–281, 289–309, and 336–356; these read FRAL…SPIF, FVPS…SILL, TWIM…DDFV, MLGQ…VMHI, LGYF…NAVN, GLAI…SYVA, AGEL…FLWF, MFMG…LAIM, IIAG…VSVF, and KIVV…IATL.

This sequence belongs to the glycosyltransferase 4 family. MraY subfamily. Requires Mg(2+) as cofactor.

Its subcellular location is the cell inner membrane. It carries out the reaction UDP-N-acetyl-alpha-D-muramoyl-L-alanyl-gamma-D-glutamyl-meso-2,6-diaminopimeloyl-D-alanyl-D-alanine + di-trans,octa-cis-undecaprenyl phosphate = di-trans,octa-cis-undecaprenyl diphospho-N-acetyl-alpha-D-muramoyl-L-alanyl-D-glutamyl-meso-2,6-diaminopimeloyl-D-alanyl-D-alanine + UMP. It functions in the pathway cell wall biogenesis; peptidoglycan biosynthesis. Catalyzes the initial step of the lipid cycle reactions in the biosynthesis of the cell wall peptidoglycan: transfers peptidoglycan precursor phospho-MurNAc-pentapeptide from UDP-MurNAc-pentapeptide onto the lipid carrier undecaprenyl phosphate, yielding undecaprenyl-pyrophosphoryl-MurNAc-pentapeptide, known as lipid I. In Hydrogenobaculum sp. (strain Y04AAS1), this protein is Phospho-N-acetylmuramoyl-pentapeptide-transferase.